Here is a 165-residue protein sequence, read N- to C-terminus: MDPPAIEHPRFAKPQRVAFVQACWHRDVVEEARIAFMKEAEARHLTHVDVFEVPGSFEIPLHAQILAKTRRYTAIVAAGLVVDGGIYRHEFVADTVIKALMDVQLRTEVPVFSAVLTPQQFHETEVHYDFFRRHFAIKGVEVAEACANTLLGLERLRGQVAAGIA.

5-amino-6-(D-ribitylamino)uracil is bound by residues Trp24, 56–58, and 80–82; these read SFE and LVV. Arg88 serves as the catalytic Proton donor. Ser113 lines the 5-amino-6-(D-ribitylamino)uracil pocket. His127 lines the (2S)-2-hydroxy-3-oxobutyl phosphate pocket.

The protein belongs to the DMRL synthase family.

It carries out the reaction (2S)-2-hydroxy-3-oxobutyl phosphate + 5-amino-6-(D-ribitylamino)uracil = 6,7-dimethyl-8-(1-D-ribityl)lumazine + phosphate + 2 H2O + H(+). It functions in the pathway cofactor biosynthesis; riboflavin biosynthesis; riboflavin from 2-hydroxy-3-oxobutyl phosphate and 5-amino-6-(D-ribitylamino)uracil: step 1/2. Its function is as follows. Catalyzes the formation of 6,7-dimethyl-8-ribityllumazine by condensation of 5-amino-6-(D-ribitylamino)uracil with 3,4-dihydroxy-2-butanone 4-phosphate. This is the penultimate step in the biosynthesis of riboflavin. This is 6,7-dimethyl-8-ribityllumazine synthase 2 from Bradyrhizobium diazoefficiens (strain JCM 10833 / BCRC 13528 / IAM 13628 / NBRC 14792 / USDA 110).